Here is a 165-residue protein sequence, read N- to C-terminus: Cytochrome c-type biogenesis protein CcmE (165 aa).

Topologically, residues 1 to 29 (MSATAEQNARNPKGKGGFARTVSQRKRKR) are cytoplasmic. Residues 30-50 (LFLIGGALAVLAVAVGLMLTA) traverse the membrane as a helical; Signal-anchor for type II membrane protein segment. Over 51 to 165 (FNQDIRFFRT…LKKKGVWEGK (115 aa)) the chain is Periplasmic. 2 residues coordinate heme: H143 and Y147.

It belongs to the CcmE/CycJ family.

The protein localises to the cell inner membrane. Its function is as follows. Heme chaperone required for the biogenesis of c-type cytochromes. Transiently binds heme delivered by CcmC and transfers the heme to apo-cytochromes in a process facilitated by CcmF and CcmH. In Brucella canis (strain ATCC 23365 / NCTC 10854 / RM-666), this protein is Cytochrome c-type biogenesis protein CcmE.